Consider the following 180-residue polypeptide: MFTFIKKVIKTGTATSSYPLEPIAVDKNFRGKPEQNPQQCIGCAACVNACPSNALTVETDLATGELAWEFNLGHCIFCGRCEEVCPTAAIKLSQEYELAVWKKEDFLQQSRFALCNCRVCNRPFAVQKEIDYAIALLKHNGDSRAENHRESFETCPECKRQKCLVPSDRIELTRHMKEAI.

2 consecutive 4Fe-4S ferredoxin-type domains span residues 31–60 (GKPE…VETD) and 66–95 (LAWE…LSQE). [4Fe-4S] cluster is bound by residues C40, C43, C46, C50, C75, C78, C81, and C85.

FHL comprises of a formate dehydrogenase, unidentified electron carriers and a hydrogenase (isoenzyme 3). In this non-energy conserving pathway, molecular hydrogen and carbodioxide are released from formate.

Probable electron transfer protein for hydrogenase 3. The protein is Formate hydrogenlyase subunit 6 (hycF) of Escherichia coli (strain K12).